Reading from the N-terminus, the 286-residue chain is S-adenosylmethionine-dependent methyltransferase UmaA (286 aa).

S-adenosyl-L-methionine-binding positions include 32 to 33 (YT), 67 to 75 (LLDIGCGWG), 93 to 98 (TLSRNQ), and 122 to 123 (WD). Cys-268 is an active-site residue.

The protein belongs to the CFA/CMAS family.

The protein resides in the cytoplasm. Functionally, methyltransferase that modifies short-chain fatty acids. In vitro, catalyzes the transfer of the methyl group from S-adenosyl-L-methionine (SAM) to the double bond of phospholipid-linked oleic acid to produce tuberculostearic acid (10-methylstearic-acid or TSA). In Mycobacterium tuberculosis (strain ATCC 25618 / H37Rv), this protein is S-adenosylmethionine-dependent methyltransferase UmaA.